Consider the following 342-residue polypeptide: Glyceraldehyde-3-phosphate dehydrogenase (342 aa).

NAD(+)-binding positions include 12 to 13 (RI), aspartate 34, lysine 78, and threonine 120. D-glyceraldehyde 3-phosphate is bound by residues 151–153 (SCT) and threonine 182. Cysteine 152 (nucleophile) is an active-site residue. Asparagine 183 lines the NAD(+) pocket. D-glyceraldehyde 3-phosphate-binding positions include arginine 197, 210–211 (TG), and arginine 233. Asparagine 322 contacts NAD(+).

This sequence belongs to the glyceraldehyde-3-phosphate dehydrogenase family. As to quaternary structure, homotetramer.

It is found in the cytoplasm. It catalyses the reaction D-glyceraldehyde 3-phosphate + phosphate + NAD(+) = (2R)-3-phospho-glyceroyl phosphate + NADH + H(+). It participates in carbohydrate degradation; glycolysis; pyruvate from D-glyceraldehyde 3-phosphate: step 1/5. Its function is as follows. Catalyzes the oxidative phosphorylation of glyceraldehyde 3-phosphate (G3P) to 1,3-bisphosphoglycerate (BPG) using the cofactor NAD. The first reaction step involves the formation of a hemiacetal intermediate between G3P and a cysteine residue, and this hemiacetal intermediate is then oxidized to a thioester, with concomitant reduction of NAD to NADH. The reduced NADH is then exchanged with the second NAD, and the thioester is attacked by a nucleophilic inorganic phosphate to produce BPG. In Aquifex aeolicus (strain VF5), this protein is Glyceraldehyde-3-phosphate dehydrogenase (gap).